The following is a 389-amino-acid chain: MDLYEYQARDLFEAHGVPVLAGIVAQTPDEAKAAAEKIGGVTVVKAQVKVGGRGKAGGVKVAKTADEAYEHAKAILGMDIKGHTVHQVMIAQGADIAEEYYFSVLLDRANRTYLAMCSVEGGMEIEQLAEERPEALAKVPVSALTGIDAETAQKIVAEAGFPEELRADVAEVIQKLWEVFEKEDATLVEVNPLVKTGDGKILALDGKVSLDDNAEFRQEGHAALVDERTEDPLEAKAKANDLNYVKLDGQVGVIGNGAGLVMSTLDVVAYAGEKHGGVKPANFLDIGGGANAEVMANGLDVILGDEQVKSVFVNVFGGITACDAVANGIVKALEILGDAATKPLVVRLDGNAVEEGRRILQEANHPLVTLAATMDEGADKAAELAHTAN.

In terms of domain architecture, ATP-grasp spans 9–236; it reads RDLFEAHGVP…ERTEDPLEAK (228 aa). Residues Lys45, 52–54, Ala94, and Glu99 contribute to the ATP site; that span reads GRG. Residues Asn191 and Asp205 each contribute to the Mg(2+) site. Substrate is bound by residues Asn256 and 318-320; that span reads GIT.

It belongs to the succinate/malate CoA ligase beta subunit family. Heterotetramer of two alpha and two beta subunits. It depends on Mg(2+) as a cofactor.

The enzyme catalyses succinate + ATP + CoA = succinyl-CoA + ADP + phosphate. It carries out the reaction GTP + succinate + CoA = succinyl-CoA + GDP + phosphate. It participates in carbohydrate metabolism; tricarboxylic acid cycle; succinate from succinyl-CoA (ligase route): step 1/1. Its function is as follows. Succinyl-CoA synthetase functions in the citric acid cycle (TCA), coupling the hydrolysis of succinyl-CoA to the synthesis of either ATP or GTP and thus represents the only step of substrate-level phosphorylation in the TCA. The beta subunit provides nucleotide specificity of the enzyme and binds the substrate succinate, while the binding sites for coenzyme A and phosphate are found in the alpha subunit. This is Succinate--CoA ligase [ADP-forming] subunit beta from Micrococcus luteus (strain ATCC 4698 / DSM 20030 / JCM 1464 / CCM 169 / CCUG 5858 / IAM 1056 / NBRC 3333 / NCIMB 9278 / NCTC 2665 / VKM Ac-2230) (Micrococcus lysodeikticus).